The chain runs to 100 residues: MAKKSLIYREKKRQKLEKKYHLIRRSSKKEISNIPSLSEKWKIHGKLQSPPRNSAPTRLHRRCFSTGRPRANYRDFGLSGHILREMVHACLLPGATRSSW.

It belongs to the universal ribosomal protein uS14 family. In terms of assembly, part of the 30S ribosomal subunit.

The protein localises to the plastid. Its subcellular location is the chloroplast. Functionally, binds 16S rRNA, required for the assembly of 30S particles. The polypeptide is Small ribosomal subunit protein uS14c (Crucihimalaya wallichii (Rock-cress)).